Reading from the N-terminus, the 382-residue chain is MSSSCIEEVSVPDDNWYRIANELLSRAGIAINGSAPADIRVKNPDFFKRVLQEGSLGLGESYMDGWWECDRLDMFFSKVLRAGLENQLPHHFKDTLRIAGARLFNLQSKKRAWIVGKEHYDLGNDLFSRMLDPFMQYSCAYWKDADNLESAQQAKLKMICEKLQLKPGMRVLDIGCGWGGLAHYMASNYDVSVVGVTISAEQQKMAQERCEGLDVTILLQDYRDLNDQFDRIVSVGMFEHVGPKNYDTYFAVVDRNLKPEGIFLLHTIGSKKTDLNVDPWINKYIFPNGCLPSVRQIAQSSEPHFVMEDWHNFGADYDTTLMAWYERFLAAWPEIADNYSERFKRMFTYYLNACAGAFRARDIQLWQVVFSRGVENGLRVAR.

S-adenosyl-L-methionine is bound by residues 137–138 (YS), 171–179 (VLDIGCGWG), and 197–202 (TISAEQ). Cys-354 is a catalytic residue.

This sequence belongs to the CFA/CMAS family.

It is found in the cytoplasm. The catalysed reaction is a 1-acyl-2-(9Z)-enoyl-sn-glycero-3-phospholipid + S-adenosyl-L-methionine = a 1-acyl-2-(9-cyclopronane)-acyl-sn-glycero-3-phospholipid + S-adenosyl-L-homocysteine + H(+). It participates in lipid metabolism; fatty acid biosynthesis. In terms of biological role, transfers a methylene group from S-adenosyl-L-methionine to the cis double bond of an unsaturated fatty acid chain resulting in the replacement of the double bond with a methylene bridge. This chain is Cyclopropane-fatty-acyl-phospholipid synthase (cfa), found in Escherichia coli O6:H1 (strain CFT073 / ATCC 700928 / UPEC).